Here is a 197-residue protein sequence, read N- to C-terminus: Holliday junction resolvase RecU (197 aa).

Residues Thr82, Asp84, Glu97, and Gln116 each coordinate Mg(2+).

This sequence belongs to the RecU family. The cofactor is Mg(2+).

The protein localises to the cytoplasm. The catalysed reaction is Endonucleolytic cleavage at a junction such as a reciprocal single-stranded crossover between two homologous DNA duplexes (Holliday junction).. Endonuclease that resolves Holliday junction intermediates in genetic recombination. Cleaves mobile four-strand junctions by introducing symmetrical nicks in paired strands. Promotes annealing of linear ssDNA with homologous dsDNA. Required for DNA repair, homologous recombination and chromosome segregation. In Streptococcus mutans serotype c (strain ATCC 700610 / UA159), this protein is Holliday junction resolvase RecU.